Consider the following 363-residue polypeptide: MQIRTYKIKDICDIQRGRGITKEYIKNNSGKYPVYSAATTNNGELGFINTYDFAGEYVTWTTNGYAGVVFYRNGKFSASQDCGVLKVRNKEINAQFLAFALSLKTPQFVHNLGSRPKLNRKVVAEISLDFPPLEVQEKIAHFLKSFNELSSQLKAELIKRQKQYAFYSDYLLNPKHSQGEEYKLFKLKDIAKKILVGGEKPSDFQKEKDQVYKYPILSNSRKADDFLGYSKTFRIAEKSITVSARGTIGAVFYRDFSYLPAVSLICFIPKPEFNINFLFHALKATKFHKQGSGTGQLTMAQFKEYQVYIPSLKKQQEIAATLDPLYYIFANSNWGIYKEIELRKKQMQYYQERLFQWIENQKV.

This sequence belongs to the type-I restriction system S methylase family. The methyltransferase is composed of M and S polypeptides.

The specificity (S) subunit of a type I methyltransferase (MTase); this subunit dictates DNA sequence specificity. The single R subunit has multiple frameshifts and is probably not expressed. This Mycoplasma pneumoniae (strain ATCC 29342 / M129 / Subtype 1) (Mycoplasmoides pneumoniae) protein is Putative type I specificity subunit S.MpnORF507P.